Consider the following 644-residue polypeptide: DNA mismatch repair protein MutL (644 aa).

Belongs to the DNA mismatch repair MutL/HexB family.

In terms of biological role, this protein is involved in the repair of mismatches in DNA. It is required for dam-dependent methyl-directed DNA mismatch repair. May act as a 'molecular matchmaker', a protein that promotes the formation of a stable complex between two or more DNA-binding proteins in an ATP-dependent manner without itself being part of a final effector complex. The protein is DNA mismatch repair protein MutL of Chlorobium chlorochromatii (strain CaD3).